Reading from the N-terminus, the 276-residue chain is N-acyl homoserine lactonase AiiB (276 aa).

Residues His-111, His-113, His-116, His-191, Asp-213, and His-259 each contribute to the Zn(2+) site.

The protein belongs to the metallo-beta-lactamase superfamily. It depends on Zn(2+) as a cofactor.

The catalysed reaction is an N-acyl-L-homoserine lactone + H2O = an N-acyl-L-homoserine + H(+). The protein is N-acyl homoserine lactonase AiiB of Agrobacterium fabrum (strain C58 / ATCC 33970) (Agrobacterium tumefaciens (strain C58)).